The primary structure comprises 180 residues: ATP-dependent protease subunit HslV (180 aa).

The active site involves threonine 7. 3 residues coordinate Na(+): alanine 164, cysteine 167, and threonine 170.

The protein belongs to the peptidase T1B family. HslV subfamily. A double ring-shaped homohexamer of HslV is capped on each side by a ring-shaped HslU homohexamer. The assembly of the HslU/HslV complex is dependent on binding of ATP.

The protein localises to the cytoplasm. It carries out the reaction ATP-dependent cleavage of peptide bonds with broad specificity.. With respect to regulation, allosterically activated by HslU binding. Functionally, protease subunit of a proteasome-like degradation complex believed to be a general protein degrading machinery. In Brevibacillus brevis (strain 47 / JCM 6285 / NBRC 100599), this protein is ATP-dependent protease subunit HslV.